A 539-amino-acid chain; its full sequence is Chaperonin GroEL (539 aa).

ATP contacts are provided by residues 29–32 (TLGP), 86–90 (DGTTT), glycine 413, 477–479 (DAL), and aspartate 493.

Belongs to the chaperonin (HSP60) family. In terms of assembly, forms a cylinder of 14 subunits composed of two heptameric rings stacked back-to-back. Interacts with the co-chaperonin GroES.

It is found in the cytoplasm. It carries out the reaction ATP + H2O + a folded polypeptide = ADP + phosphate + an unfolded polypeptide.. Together with its co-chaperonin GroES, plays an essential role in assisting protein folding. The GroEL-GroES system forms a nano-cage that allows encapsulation of the non-native substrate proteins and provides a physical environment optimized to promote and accelerate protein folding. The sequence is that of Chaperonin GroEL from Clostridium perfringens (strain ATCC 13124 / DSM 756 / JCM 1290 / NCIMB 6125 / NCTC 8237 / Type A).